A 199-amino-acid polypeptide reads, in one-letter code: Large ribosomal subunit protein bL25 (199 aa).

The protein belongs to the bacterial ribosomal protein bL25 family. CTC subfamily. Part of the 50S ribosomal subunit; part of the 5S rRNA/L5/L18/L25 subcomplex. Contacts the 5S rRNA. Binds to the 5S rRNA independently of L5 and L18.

In terms of biological role, this is one of the proteins that binds to the 5S RNA in the ribosome where it forms part of the central protuberance. This Pelobacter propionicus (strain DSM 2379 / NBRC 103807 / OttBd1) protein is Large ribosomal subunit protein bL25.